A 498-amino-acid polypeptide reads, in one-letter code: Aldehyde dehydrogenase, mitochondrial (498 aa).

The N-terminal 9 residues, 1–9, are a transit peptide targeting the mitochondrion; it reads MLRATLARL. Position 242–247 (242–247) interacts with NAD(+); sequence GSTAVG. The active-site Proton acceptor is E265. C299 (nucleophile) is an active-site residue.

The protein belongs to the aldehyde dehydrogenase family.

The protein resides in the mitochondrion. The catalysed reaction is an aldehyde + NAD(+) + H2O = a carboxylate + NADH + 2 H(+). Its pathway is alcohol metabolism; ethanol degradation; acetate from ethanol: step 2/2. Its function is as follows. Could have an RNA-binding activity in addition of its catalytic role. This Leishmania tarentolae (Sauroleishmania tarentolae) protein is Aldehyde dehydrogenase, mitochondrial (ALDH2).